The chain runs to 868 residues: Receptor-like protein 32 (868 aa).

The signal sequence occupies residues 1–32 (MKDSWNSTSIIPFTFSSLIFFLFTFDFQDVFG). Residues 33–815 (VPTKHLCRLE…PPELEEEDRE (783 aa)) lie on the Extracellular side of the membrane. N-linked (GlcNAc...) asparagine glycosylation is found at Asn73, Asn109, Asn141, and Asn165. LRR repeat units follow at residues 118–142 (LRFL…IENF), 143–166 (SHLT…IGNL), 168–188 (QLTF…FFGN), 189–213 (MNQL…LLNL), 214–237 (KHLS…MSSL), 239–261 (NLEY…LFTI), 262–285 (ASLT…NISS), 287–310 (STLT…ISKF), 312–334 (NLQD…IFTN), 335–360 (LKSL…LFSS), 362–385 (LNSI…SVAD), 389–412 (TQLI…LRSQ), 413–436 (HKMT…LWTL), 438–459 (KLIF…TEHG), 465–489 (KPSM…ICAL), 490–515 (RSLI…NLKS), 517–538 (LSFL…IFKS), 540–560 (RSLD…FIRL), 561–586 (SALE…SLKK), 588–606 (QVLV…HASF), 607–630 (HTLR…YFVN), 675–699 (LKIY…IGLL), 700–723 (KELH…MGNL), 724–747 (RELE…LGNL), and 749–772 (YLAY…QFRR). The N-linked (GlcNAc...) asparagine glycan is linked to Asn233. N-linked (GlcNAc...) asparagine glycosylation is found at Asn275 and Asn282. Asn342 and Asn347 each carry an N-linked (GlcNAc...) asparagine glycan. N-linked (GlcNAc...) asparagine glycosylation is found at Asn477 and Asn503. The N-linked (GlcNAc...) asparagine glycan is linked to Asn574. Asn613 carries an N-linked (GlcNAc...) asparagine glycan. N-linked (GlcNAc...) asparagine glycosylation is found at Asn706, Asn746, Asn754, and Asn774. The helical transmembrane segment at 816–836 (VFSWIAAAIGFGPGIAFGLTI) threads the bilayer. The Cytoplasmic segment spans residues 837–868 (RYILVFYKPDWFMHTFGHLQPSAHEKRLRRKQ).

The protein belongs to the RLP family.

Its subcellular location is the cell membrane. This is Receptor-like protein 32 from Arabidopsis thaliana (Mouse-ear cress).